A 557-amino-acid chain; its full sequence is MFKSDIEIAQESKMKNIKNIAEKIGLTEEDIDLYGKYKCKISLDVLKSNKDKKDGKLILVTAINPTPAGEGKSTVTVGLGQALWKKNKKAVIALREPSLGPVFGIKGGAAGGGYSQVVPMEDINLHFTGDMHAITSANNLLAAAIDNHIHQGNILKIDQRRILFKRVMDINDRALRNVIVALGGKINGFPREDGFMITVASEIMAILCLAEDLMNLKNKMGEILVAYSTEGKPIYCKDLEVQGAMALLMKDAIKPNLVQTLENTPAIIHGGPFANIAHGCNSILGTKMALKLGDYVITEAGFGADLGAEKFFDIKCRKANLKPNCVVIVATVRALKYNGGIPKENLKEQNMEALSKGIKNLGKHIENVNKFGVPAVVAINKFISDTEEEIEFIKKYCKELGAEVSIAEVWEKGGNGGLELADKVLDTIENKESKFNPIYEETLNIKQKIETIAQEIYGAEGVDYSKEAEKQISEIEKLDLDKKPVCMAKTQYSLSDDARLLGRPCGFRINVKEVRISNGAGFIVVLTGNVMTMPGLPKKPAANNMNVLSDGNIVGLF.

Position 66–73 (66–73) interacts with ATP; the sequence is TPAGEGKS.

The protein belongs to the formate--tetrahydrofolate ligase family.

It carries out the reaction (6S)-5,6,7,8-tetrahydrofolate + formate + ATP = (6R)-10-formyltetrahydrofolate + ADP + phosphate. It functions in the pathway one-carbon metabolism; tetrahydrofolate interconversion. The chain is Formate--tetrahydrofolate ligase from Clostridium botulinum (strain Kyoto / Type A2).